A 392-amino-acid chain; its full sequence is DNA replication and repair protein RecF (392 aa).

An ATP-binding site is contributed by 33–40 (GANGAGKT).

Belongs to the RecF family.

Its subcellular location is the cytoplasm. In terms of biological role, the RecF protein is involved in DNA metabolism; it is required for DNA replication and normal SOS inducibility. RecF binds preferentially to single-stranded, linear DNA. It also seems to bind ATP. The polypeptide is DNA replication and repair protein RecF (Caulobacter sp. (strain K31)).